Consider the following 164-residue polypeptide: Cyclic pyranopterin monophosphate synthase (164 aa).

Substrate is bound by residues 73-75 and 111-112; these read LCH and ME. Residue D126 is part of the active site.

This sequence belongs to the MoaC family. As to quaternary structure, homohexamer; trimer of dimers.

It carries out the reaction (8S)-3',8-cyclo-7,8-dihydroguanosine 5'-triphosphate = cyclic pyranopterin phosphate + diphosphate. The protein operates within cofactor biosynthesis; molybdopterin biosynthesis. In terms of biological role, catalyzes the conversion of (8S)-3',8-cyclo-7,8-dihydroguanosine 5'-triphosphate to cyclic pyranopterin monophosphate (cPMP). This is Cyclic pyranopterin monophosphate synthase from Herpetosiphon aurantiacus (strain ATCC 23779 / DSM 785 / 114-95).